Here is a 448-residue protein sequence, read N- to C-terminus: MKHRYLPATEKDKQEMLATIGVSSIDDLFADIPENVKYKKEHQIKKAKSETELTRELTKLASKNRDTVQYASFLGAGVYDHYQPVIVDHVISRSEFYTAYTPYQPEISQGELQAIFEFQTMICELTGMDIANSSMYDGGTALAEAAMLASGHTKKKKIVVSKTVHPESREVLKTYAKGQYIDVVEVPAADGVTDLDALRQTVCENTAAVIVQYPNFFGRIEPLKDIEPIAHQGKSMFIVSANPLALGLLTPPGKFQSDIVVGDAQPFGIPSAYGGPHCGFFAVTKKLMRKVPGRLVGQTEDENGKRGFVLTLQAREQHIRRDKATSNICSNQALNALAASVAMTALGKNGVKDIARQNLLKANYAKQEAKKAGLTVMFDGPMFNEFVIKLDEPVRAVNKRLLAKGMIGGYDLGLTYPELDCHMLIAVTELRTKEEIDALIQELGDRHE.

It belongs to the GcvP family. N-terminal subunit subfamily. The glycine cleavage system is composed of four proteins: P, T, L and H. In this organism, the P 'protein' is a heterodimer of two subunits.

It carries out the reaction N(6)-[(R)-lipoyl]-L-lysyl-[glycine-cleavage complex H protein] + glycine + H(+) = N(6)-[(R)-S(8)-aminomethyldihydrolipoyl]-L-lysyl-[glycine-cleavage complex H protein] + CO2. In terms of biological role, the glycine cleavage system catalyzes the degradation of glycine. The P protein binds the alpha-amino group of glycine through its pyridoxal phosphate cofactor; CO(2) is released and the remaining methylamine moiety is then transferred to the lipoamide cofactor of the H protein. This is Probable glycine dehydrogenase (decarboxylating) subunit 1 (gcvPA) from Bacillus subtilis (strain 168).